Here is a 188-residue protein sequence, read N- to C-terminus: Molybdopterin synthase catalytic subunit (188 aa).

The span at 1-14 (MATQPPQDQTSTTP) shows a compositional bias: low complexity. Residues 1 to 23 (MATQPPQDQTSTTPSLPPHLDPT) are disordered. Substrate is bound by residues 134–135 (HR), K150, and 157–159 (KRE).

It belongs to the MoaE family. MOCS2B subfamily. Heterotetramer; composed of 2 small (MOCS2A) and 2 large (MOCS2B) subunits.

The protein localises to the cytoplasm. It carries out the reaction 2 [molybdopterin-synthase sulfur-carrier protein]-C-terminal-Gly-aminoethanethioate + cyclic pyranopterin phosphate + H2O = molybdopterin + 2 [molybdopterin-synthase sulfur-carrier protein]-C-terminal Gly-Gly + 2 H(+). Its pathway is cofactor biosynthesis; molybdopterin biosynthesis. Functionally, catalytic subunit of the molybdopterin synthase complex, a complex that catalyzes the conversion of precursor Z into molybdopterin. Acts by mediating the incorporation of 2 sulfur atoms from thiocarboxylated MOCS2A into precursor Z to generate a dithiolene group. The sequence is that of Molybdopterin synthase catalytic subunit from Aspergillus fumigatus (strain ATCC MYA-4609 / CBS 101355 / FGSC A1100 / Af293) (Neosartorya fumigata).